We begin with the raw amino-acid sequence, 273 residues long: Hydroxyethylthiazole kinase (273 aa).

Substrate is bound at residue Met-47. Arg-123 and Thr-172 together coordinate ATP. Gly-199 lines the substrate pocket.

Belongs to the Thz kinase family. The cofactor is Mg(2+).

The enzyme catalyses 5-(2-hydroxyethyl)-4-methylthiazole + ATP = 4-methyl-5-(2-phosphooxyethyl)-thiazole + ADP + H(+). The protein operates within cofactor biosynthesis; thiamine diphosphate biosynthesis; 4-methyl-5-(2-phosphoethyl)-thiazole from 5-(2-hydroxyethyl)-4-methylthiazole: step 1/1. In terms of biological role, catalyzes the phosphorylation of the hydroxyl group of 4-methyl-5-beta-hydroxyethylthiazole (THZ). In Ruminiclostridium cellulolyticum (strain ATCC 35319 / DSM 5812 / JCM 6584 / H10) (Clostridium cellulolyticum), this protein is Hydroxyethylthiazole kinase.